The chain runs to 294 residues: C-type lectin domain family 4 member G (294 aa).

The Cytoplasmic segment spans residues methionine 1–arginine 30. A helical; Signal-anchor for type II membrane protein membrane pass occupies residues leucine 31–threonine 51. Over leucine 52–tyrosine 294 the chain is Extracellular. The N-linked (GlcNAc...) asparagine glycan is linked to asparagine 73. Residues alanine 100–alanine 151 adopt a coiled-coil conformation. N-linked (GlcNAc...) asparagine glycans are attached at residues asparagine 159, asparagine 246, and asparagine 256. Residues phenylalanine 172 to cysteine 287 form the C-type lectin domain. An intrachain disulfide couples cysteine 264 to cysteine 278.

It localises to the cell membrane. Functionally, binds mannose, N-acetylglucosamine (GlcNAc) and fucose, but not galactose, in a Ca(2+)-dependent manner. In Mus musculus (Mouse), this protein is C-type lectin domain family 4 member G (Clec4g).